We begin with the raw amino-acid sequence, 431 residues long: Adenylosuccinate synthetase (431 aa).

Residues 12 to 18 and 40 to 42 each bind GTP; these read GDEGKGK and GHT. Asp-13 functions as the Proton acceptor in the catalytic mechanism. Positions 13 and 40 each coordinate Mg(2+). Residues 13-16, 38-41, Thr-128, Arg-142, Gln-223, Thr-238, and Arg-301 each bind IMP; these read DEGK and NAGH. Residue His-41 is the Proton donor of the active site. Position 297–303 (297–303) interacts with substrate; that stretch reads TVTGRPR. Residues Arg-303, 329 to 331, and 411 to 413 contribute to the GTP site; these read SID and SVG.

Belongs to the adenylosuccinate synthetase family. Homodimer. Mg(2+) serves as cofactor.

The protein resides in the cytoplasm. It catalyses the reaction IMP + L-aspartate + GTP = N(6)-(1,2-dicarboxyethyl)-AMP + GDP + phosphate + 2 H(+). It functions in the pathway purine metabolism; AMP biosynthesis via de novo pathway; AMP from IMP: step 1/2. Plays an important role in the de novo pathway of purine nucleotide biosynthesis. Catalyzes the first committed step in the biosynthesis of AMP from IMP. The sequence is that of Adenylosuccinate synthetase from Lacticaseibacillus paracasei (strain ATCC 334 / BCRC 17002 / CCUG 31169 / CIP 107868 / KCTC 3260 / NRRL B-441) (Lactobacillus paracasei).